We begin with the raw amino-acid sequence, 319 residues long: Ribonuclease Z (319 aa).

Residues His-62, His-64, Asp-66, His-67, His-145, Asp-215, and His-273 each coordinate Zn(2+). The active-site Proton acceptor is the Asp-66.

The protein belongs to the RNase Z family. Homodimer. Zn(2+) is required as a cofactor.

The catalysed reaction is Endonucleolytic cleavage of RNA, removing extra 3' nucleotides from tRNA precursor, generating 3' termini of tRNAs. A 3'-hydroxy group is left at the tRNA terminus and a 5'-phosphoryl group is left at the trailer molecule.. In terms of biological role, zinc phosphodiesterase, which displays some tRNA 3'-processing endonuclease activity. Probably involved in tRNA maturation, by removing a 3'-trailer from precursor tRNA. The sequence is that of Ribonuclease Z from Borrelia recurrentis (strain A1).